A 171-amino-acid polypeptide reads, in one-letter code: PRA1-like protein (171 aa).

Transmembrane regions (helical) follow at residues 67–87 (AIIAMLVIYALIRNPLLLIVI), 119–139 (VILACVLIPLGLFASPIETII), and 140–160 (WLVGASCVCVFGHAAFFEPPV).

Belongs to the PRA1 family.

The protein localises to the membrane. The polypeptide is PRA1-like protein (Schizosaccharomyces pombe (strain 972 / ATCC 24843) (Fission yeast)).